A 467-amino-acid chain; its full sequence is Probable citrate synthase 1, mitochondrial (467 aa).

Active-site residues include His303, His349, and Asp404.

Belongs to the citrate synthase family. In terms of assembly, homodimer.

Its subcellular location is the mitochondrion matrix. It catalyses the reaction oxaloacetate + acetyl-CoA + H2O = citrate + CoA + H(+). It participates in carbohydrate metabolism; tricarboxylic acid cycle; isocitrate from oxaloacetate: step 1/2. This is Probable citrate synthase 1, mitochondrial from Aedes aegypti (Yellowfever mosquito).